The chain runs to 92 residues: Small ribosomal subunit protein uS19 (92 aa).

Belongs to the universal ribosomal protein uS19 family.

In terms of biological role, protein S19 forms a complex with S13 that binds strongly to the 16S ribosomal RNA. The protein is Small ribosomal subunit protein uS19 of Borrelia duttonii (strain Ly).